Consider the following 149-residue polypeptide: Gamma-glutamylaminecyclotransferase (149 aa).

Residue 7–10 (YGTL) coordinates substrate. The Proton acceptor role is filled by glutamate 82.

The protein belongs to the gamma-glutamylcyclotransferase family. In terms of assembly, monomer.

The catalysed reaction is epsilon-(gamma-L-glutamyl)-L-lysine = 5-oxo-L-proline + L-lysine. Functionally, contributes to degradation of proteins cross-linked by transglutaminases by degrading the cross-link between a lysine and a glutamic acid residue. Catalyzes the formation of 5-oxo-L-proline from L-gamma-glutamyl-L-epsilon-lysine. Inactive with L-gamma-glutamyl-alpha-amino acid substrates such as L-gamma-glutamyl-L-alpha-cysteine and L-gamma-glutamyl-L-alpha-alanine. This Rattus norvegicus (Rat) protein is Gamma-glutamylaminecyclotransferase (Ggact).